Consider the following 142-residue polypeptide: AP-2 complex subunit sigma (142 aa).

This sequence belongs to the adaptor complexes small subunit family. In terms of assembly, adaptor protein complex 2 (AP-2) is a heterotetramer composed of two large adaptins (alpha-type and beta-type subunits), a medium adaptin (mu-type subunit AP50) and a small adaptin (sigma-type subunit AP17).

It localises to the cell membrane. The protein resides in the membrane. It is found in the coated pit. Functionally, component of the adaptor complexes which link clathrin to receptors in coated vesicles. Clathrin-associated protein complexes are believed to interact with the cytoplasmic tails of membrane proteins, leading to their selection and concentration. In Dictyostelium discoideum (Social amoeba), this protein is AP-2 complex subunit sigma (ap2s1).